The chain runs to 226 residues: Orotidine 5'-phosphate decarboxylase (226 aa).

Residues Asp-8, Lys-30, Asp-58–Thr-67, Thr-117, Arg-177, Gln-186, Gly-206, and Arg-207 contribute to the substrate site. The active-site Proton donor is Lys-60.

The protein belongs to the OMP decarboxylase family. Type 1 subfamily. As to quaternary structure, homodimer.

The enzyme catalyses orotidine 5'-phosphate + H(+) = UMP + CO2. The protein operates within pyrimidine metabolism; UMP biosynthesis via de novo pathway; UMP from orotate: step 2/2. Its function is as follows. Catalyzes the decarboxylation of orotidine 5'-monophosphate (OMP) to uridine 5'-monophosphate (UMP). The polypeptide is Orotidine 5'-phosphate decarboxylase (Campylobacter jejuni subsp. jejuni serotype O:6 (strain 81116 / NCTC 11828)).